A 160-amino-acid chain; its full sequence is General odorant-binding protein 2 (160 aa).

Residues 1–19 (MGYKLLLMYIAIVIDSVIG) form the signal peptide. Intrachain disulfides connect cysteine 38-cysteine 73, cysteine 69-cysteine 127, and cysteine 116-cysteine 136.

The protein belongs to the PBP/GOBP family. As to expression, antenna.

Present in the aqueous fluid surrounding olfactory sensory dendrites and are thought to aid in the capture and transport of hydrophobic odorants into and through this fluid. The sequence is that of General odorant-binding protein 2 from Antheraea pernyi (Chinese oak silk moth).